The following is a 70-amino-acid chain: Turripeptide Gsg9.2 (70 aa).

The signal sequence occupies residues 1-20 (MKVYCLLLVLLVGLVSQAHG). In terms of domain architecture, Kazal-like spans 21–70 (QLDKKCQMVCTMDYRPVCGSDGRTYPNKCTLTSTACMSQRSITVFHDGEC). 3 cysteine pairs are disulfide-bonded: cysteine 26–cysteine 56, cysteine 30–cysteine 49, and cysteine 38–cysteine 70.

It belongs to the conopeptide P-like superfamily. Expressed by the venom duct.

The protein localises to the secreted. Its function is as follows. Acts as a neurotoxin by inhibiting an ion channel. May also act as a serine protease inhibitor, since it possess the kazal serine protease inhibitor signature. In Gemmula sogodensis (Gem-turris), this protein is Turripeptide Gsg9.2.